Consider the following 514-residue polypeptide: RNA-binding region-containing protein 3 (514 aa).

Residues 1 to 26 form a disordered region; the sequence is MAGPEPPMPLSRGGPGSASLSPPRGD. The residue at position 21 (serine 21) is a Phosphoserine. In terms of domain architecture, RRM 1 spans 27-102; the sequence is RTLLVRHLPA…HTLVVEFAKE (76 aa). Disordered stretches follow at residues 106–133, 213–282, and 337–363; these read VHSP…EKKE, MPLH…VRKK, and ETQP…FGKI. Serine 108 bears the Phosphoserine mark. Positions 115 to 133 are enriched in basic and acidic residues; it reads TEKKKRLDDTVENDKEKKE. Residues 217-230 are compositionally biased toward pro residues; sequence APLPPTSPQPPEEP. The residue at position 349 (serine 349) is a Phosphoserine. Positions 418–501 constitute an RRM 2 domain; sequence CRIYVKNLAR…KPMVVQFARS (84 aa).

Component of the U11/U12 snRNPs that are part of the U12-type spliceosome. Found in a complex with m(7)G-capped U12 snRNA. Interacts with PDCD7.

The protein localises to the nucleus. In terms of biological role, participates in pre-mRNA U12-dependent splicing, performed by the minor spliceosome which removes U12-type introns. U12-type introns comprises less than 1% of all non-coding sequences. Binds to the 3'-stem-loop of m(7)G-capped U12 snRNA. The sequence is that of RNA-binding region-containing protein 3 (Rnpc3) from Mus musculus (Mouse).